The sequence spans 84 residues: Figainin 2 (84 aa).

The N-terminal stretch at 1–22 is a signal peptide; that stretch reads MAFLKKSLFLVLFLGIVSLSVC. Residues 23–39 are compositionally biased toward basic and acidic residues; the sequence is EEEKREGEEKEEKREEE. Positions 23 to 53 are disordered; sequence EEEKREGEEKEEKREEEEGKEENEDGNEEHK. A propeptide spanning residues 23–54 is cleaved from the precursor; sequence EEEKREGEEKEEKREEEEGKEENEDGNEEHKE. Positions 40 to 49 are enriched in acidic residues; that stretch reads EGKEENEDGN.

In terms of tissue distribution, expressed by the skin glands.

Its subcellular location is the secreted. Functionally, antimicrobial peptide that displays antibacterial, antiprotozoal, and antiviral activity. Exhibits antibacterial activity against the Gram-positive bacteria S.epidermidis ATCC 12228 (MIC=4 uM), E.casseliflavus ATCC 700327 (MIC=4 uM), S.aureus ATCC 25923 (MIC=8 uM) and E.faecalis ATCC 29212 (MIC=8 uM), and the Gram-negative bacteria E.coli ATCC 25922 (MIC=8 uM), K.pneumoniae ATCC 13883 (MIC=8 uM), the multi-resistant clinical isolate strain K.pneumoniae carbapanemase (KPC) MR (MIC=16 uM), and P.aeruginosa ATCC 27853 (MIC=32 uM). Displays antiprotozoal activity against the epimastigote form of T.cruzi (IC(50)=6.32 uM). Does not show antimicrobial against the fungi C.albicans ATCC 90028 and C.parapsilosis ATCC 22019. Displays antiviral activity against the human viruses chikungunya (EC(50)=17.9 uM), Dengue serotype 4 (EC(50)=20.8 uM) and Yellow Fever (EC(50)=21.8 uM). Shows moderate cytolytic activity against human erythrocytes (HC(50)=48.9 uM), and activates the oxidative burst in human neutrophils. Also displays anti-proliferative effects against MCF-7 breast cancer cells (IC(50)=15.3 uM) and B16F10 murine melanoma cells (IC(50)=12.8 uM). In Boana raniceps (Chaco tree frog), this protein is Figainin 2.